Reading from the N-terminus, the 304-residue chain is UDP-3-O-acyl-N-acetylglucosamine deacetylase (304 aa).

Residues H79, H238, and D242 each coordinate Zn(2+). The Proton donor role is filled by H265.

The protein belongs to the LpxC family. The cofactor is Zn(2+).

It carries out the reaction a UDP-3-O-[(3R)-3-hydroxyacyl]-N-acetyl-alpha-D-glucosamine + H2O = a UDP-3-O-[(3R)-3-hydroxyacyl]-alpha-D-glucosamine + acetate. It functions in the pathway glycolipid biosynthesis; lipid IV(A) biosynthesis; lipid IV(A) from (3R)-3-hydroxytetradecanoyl-[acyl-carrier-protein] and UDP-N-acetyl-alpha-D-glucosamine: step 2/6. In terms of biological role, catalyzes the hydrolysis of UDP-3-O-myristoyl-N-acetylglucosamine to form UDP-3-O-myristoylglucosamine and acetate, the committed step in lipid A biosynthesis. This is UDP-3-O-acyl-N-acetylglucosamine deacetylase from Pseudoalteromonas atlantica (strain T6c / ATCC BAA-1087).